We begin with the raw amino-acid sequence, 622 residues long: Glutamyl-tRNA(Gln) amidotransferase subunit E (622 aa).

This sequence belongs to the GatB/GatE family. GatE subfamily. In terms of assembly, heterodimer of GatD and GatE.

The enzyme catalyses L-glutamyl-tRNA(Gln) + L-glutamine + ATP + H2O = L-glutaminyl-tRNA(Gln) + L-glutamate + ADP + phosphate + H(+). Allows the formation of correctly charged Gln-tRNA(Gln) through the transamidation of misacylated Glu-tRNA(Gln) in organisms which lack glutaminyl-tRNA synthetase. The reaction takes place in the presence of glutamine and ATP through an activated gamma-phospho-Glu-tRNA(Gln). The GatDE system is specific for glutamate and does not act on aspartate. In Halobacterium salinarum (strain ATCC 29341 / DSM 671 / R1), this protein is Glutamyl-tRNA(Gln) amidotransferase subunit E.